Reading from the N-terminus, the 163-residue chain is 2-amino-4-hydroxy-6-hydroxymethyldihydropteridine pyrophosphokinase (163 aa).

This sequence belongs to the HPPK family.

The enzyme catalyses 6-hydroxymethyl-7,8-dihydropterin + ATP = (7,8-dihydropterin-6-yl)methyl diphosphate + AMP + H(+). The protein operates within cofactor biosynthesis; tetrahydrofolate biosynthesis; 2-amino-4-hydroxy-6-hydroxymethyl-7,8-dihydropteridine diphosphate from 7,8-dihydroneopterin triphosphate: step 4/4. Its function is as follows. Catalyzes the transfer of pyrophosphate from adenosine triphosphate (ATP) to 6-hydroxymethyl-7,8-dihydropterin, an enzymatic step in folate biosynthesis pathway. In Helicobacter pylori (strain ATCC 700392 / 26695) (Campylobacter pylori), this protein is 2-amino-4-hydroxy-6-hydroxymethyldihydropteridine pyrophosphokinase (folK).